A 259-amino-acid chain; its full sequence is Type III pantothenate kinase (259 aa).

Position 6–13 (6–13 (DCGNTNTL)) interacts with ATP. Residue 108–111 (GADR) participates in substrate binding. The active-site Proton acceptor is the aspartate 110. Aspartate 130 contributes to the K(+) binding site. Threonine 133 serves as a coordination point for ATP. Residue threonine 185 coordinates substrate.

The protein belongs to the type III pantothenate kinase family. In terms of assembly, homodimer. NH4(+) is required as a cofactor. It depends on K(+) as a cofactor.

It is found in the cytoplasm. The catalysed reaction is (R)-pantothenate + ATP = (R)-4'-phosphopantothenate + ADP + H(+). It participates in cofactor biosynthesis; coenzyme A biosynthesis; CoA from (R)-pantothenate: step 1/5. In terms of biological role, catalyzes the phosphorylation of pantothenate (Pan), the first step in CoA biosynthesis. The chain is Type III pantothenate kinase from Maricaulis maris (strain MCS10) (Caulobacter maris).